The chain runs to 64 residues: Large ribosomal subunit protein bL28 (64 aa).

The segment at 1 to 26 is disordered; the sequence is MARRDQLTGKGPLSGNTRSHAMNHSK.

Belongs to the bacterial ribosomal protein bL28 family.

In Ureaplasma urealyticum serovar 10 (strain ATCC 33699 / Western), this protein is Large ribosomal subunit protein bL28.